The chain runs to 745 residues: Junction plakoglobin (745 aa).

At methionine 1 the chain carries N-acetylmethionine. A glycan (O-linked (GlcNAc) threonine) is linked at threonine 14. Serine 99 and serine 125 each carry phosphoserine. ARM repeat units lie at residues 132-171, 172-215, 216-255, 258-297, 298-341, 342-381, 383-420, 423-464, 470-510, 512-551, 574-613, and 615-661; these read NYQD…QLSK, KEAS…LSHH, REGL…NLLL, EGAK…LLAY, GNQE…LSVC, PSNK…NLSD, ATKQ…NLTC, SKNK…HLTS, EMAQ…NLAL, PANH…QPYT, PMNR…ELAQ, and KEAA…PDYR. The segment at 132–297 is interaction with DSC1 and DSG1; that stretch reads NYQDDAELAT…TTDCLQLLAY (166 aa). Serine 182 bears the Phosphoserine mark. Positions 574-661 are interaction with DSC1; it reads PMNRMEIFRL…ISEDKNPDYR (88 aa). 2 positions are modified to phosphoserine: serine 665 and serine 730.

Belongs to the beta-catenin family. As to quaternary structure, homodimer. Component of an E-cadherin/catenin adhesion complex composed of at least E-cadherin/CDH1 and gamma-catenin/JUP, and possibly alpha-catenin/CTNNA1; the complex is located to adherens junctions. The stable association of CTNNA1 is controversial as CTNNA1 was shown not to bind to F-actin when assembled in the complex. Interacts with MUC1. Interacts with CAV1. Interacts with PTPRJ. Interacts with DSG1. Interacts with DSC1 and DSC2. Interacts with PKP2. Interacts with PKP3 (via N-terminus); the interaction is required for PKP3 localization to desmosome cell-cell junctions. Interacts with DSG4. In terms of processing, may be phosphorylated by FER.

It is found in the cell junction. The protein resides in the adherens junction. It localises to the desmosome. The protein localises to the cytoplasm. Its subcellular location is the cytoskeleton. It is found in the cell membrane. The protein resides in the nucleus. Its function is as follows. Common junctional plaque protein. The membrane-associated plaques are architectural elements in an important strategic position to influence the arrangement and function of both the cytoskeleton and the cells within the tissue. The presence of plakoglobin in both the desmosomes and in the intermediate junctions suggests that it plays a central role in the structure and function of submembranous plaques. Acts as a substrate for VE-PTP and is required by it to stimulate VE-cadherin function in endothelial cells. Can replace beta-catenin in E-cadherin/catenin adhesion complexes which are proposed to couple cadherins to the actin cytoskeleton. In Bos taurus (Bovine), this protein is Junction plakoglobin.